Here is a 698-residue protein sequence, read N- to C-terminus: Elongation factor G (698 aa).

The tr-type G domain occupies 8–284 (ANVRNIGIMA…AVVDFLPSPL (277 aa)). GTP is bound by residues 17–24 (AHIDAGKT), 81–85 (DTPGH), and 135–138 (NKLD). Residues 289 to 309 (IEGTGTDGETPLQRKPSTSEP) form a disordered region.

This sequence belongs to the TRAFAC class translation factor GTPase superfamily. Classic translation factor GTPase family. EF-G/EF-2 subfamily.

Its subcellular location is the cytoplasm. Functionally, catalyzes the GTP-dependent ribosomal translocation step during translation elongation. During this step, the ribosome changes from the pre-translocational (PRE) to the post-translocational (POST) state as the newly formed A-site-bound peptidyl-tRNA and P-site-bound deacylated tRNA move to the P and E sites, respectively. Catalyzes the coordinated movement of the two tRNA molecules, the mRNA and conformational changes in the ribosome. The protein is Elongation factor G of Salinispora arenicola (strain CNS-205).